The following is a 147-amino-acid chain: Putative pre-16S rRNA nuclease (147 aa).

It belongs to the YqgF nuclease family.

It localises to the cytoplasm. Functionally, could be a nuclease involved in processing of the 5'-end of pre-16S rRNA. This chain is Putative pre-16S rRNA nuclease, found in Acinetobacter baylyi (strain ATCC 33305 / BD413 / ADP1).